The sequence spans 192 residues: Fe/S biogenesis protein NfuA (192 aa).

[4Fe-4S] cluster contacts are provided by Cys149 and Cys152.

This sequence belongs to the NfuA family. In terms of assembly, homodimer. Requires [4Fe-4S] cluster as cofactor.

In terms of biological role, involved in iron-sulfur cluster biogenesis. Binds a 4Fe-4S cluster, can transfer this cluster to apoproteins, and thereby intervenes in the maturation of Fe/S proteins. Could also act as a scaffold/chaperone for damaged Fe/S proteins. In Shewanella pealeana (strain ATCC 700345 / ANG-SQ1), this protein is Fe/S biogenesis protein NfuA.